A 211-amino-acid polypeptide reads, in one-letter code: N-(5'-phosphoribosyl)anthranilate isomerase (211 aa).

Belongs to the TrpF family.

The enzyme catalyses N-(5-phospho-beta-D-ribosyl)anthranilate = 1-(2-carboxyphenylamino)-1-deoxy-D-ribulose 5-phosphate. The protein operates within amino-acid biosynthesis; L-tryptophan biosynthesis; L-tryptophan from chorismate: step 3/5. The sequence is that of N-(5'-phosphoribosyl)anthranilate isomerase from Methanococcus maripaludis (strain C6 / ATCC BAA-1332).